We begin with the raw amino-acid sequence, 515 residues long: Ecdysteroid UDP-glucosyltransferase (515 aa).

An N-terminal signal peptide occupies residues methionine 1–serine 31.

Belongs to the UDP-glycosyltransferase family.

In terms of biological role, catalyzes the transfer of glucose from UDP-glucose to ecdysteroids which are insect molting hormones. Expression of egt interferes with normal insect development and block molting. The polypeptide is Ecdysteroid UDP-glucosyltransferase (EGT) (Spodoptera littoralis nuclear polyhedrosis virus (SlNPV)).